The sequence spans 166 residues: Large ribosomal subunit protein uL10 (166 aa).

The protein belongs to the universal ribosomal protein uL10 family. In terms of assembly, part of the ribosomal stalk of the 50S ribosomal subunit. The N-terminus interacts with L11 and the large rRNA to form the base of the stalk. The C-terminus forms an elongated spine to which L12 dimers bind in a sequential fashion forming a multimeric L10(L12)X complex.

Forms part of the ribosomal stalk, playing a central role in the interaction of the ribosome with GTP-bound translation factors. The chain is Large ribosomal subunit protein uL10 from Aeromonas salmonicida (strain A449).